We begin with the raw amino-acid sequence, 105 residues long: Heat shock protein HspQ (105 aa).

The interval 77 to 105 is disordered; the sequence is MRDEHPEQPSMDELARTIRKQLQAPRLRN.

The protein belongs to the HspQ family.

The protein localises to the cytoplasm. Involved in the degradation of certain denaturated proteins, including DnaA, during heat shock stress. The sequence is that of Heat shock protein HspQ from Salmonella arizonae (strain ATCC BAA-731 / CDC346-86 / RSK2980).